Consider the following 446-residue polypeptide: Na(+)/H(+) antiporter NhaA (446 aa).

A run of 11 helical transmembrane segments spans residues 23 to 43 (GGMLLMGVVLLAMFLANSPWG), 73 to 93 (LMTFINDALMAVFFFSVGLEI), 109 to 129 (LLPIVAACGGMLVPVLIYYFM), 138 to 158 (GLAIPMATDIAFSLGVLSLFG), 167 to 187 (VFLTAFAVVDDIGGILVIALF), 193 to 213 (SVNYLIASAGILLILCGGNFF), 219 to 239 (WFYIFWGVIMWYLFLQSGIHA), 314 to 334 (MVNYIILPLFAFANAGVSLTA), 348 to 368 (VLAGLLAGKFAGIYFFTWLVI), 381 to 401 (WVNLTGICLLGGIGFTVSLFI), and 419 to 439 (GVILGTVLAGVLAYLVLQFAL).

This sequence belongs to the NhaA Na(+)/H(+) (TC 2.A.33) antiporter family.

It is found in the cell inner membrane. The catalysed reaction is Na(+)(in) + 2 H(+)(out) = Na(+)(out) + 2 H(+)(in). Na(+)/H(+) antiporter that extrudes sodium in exchange for external protons. The protein is Na(+)/H(+) antiporter NhaA of Phocaeicola vulgatus (strain ATCC 8482 / DSM 1447 / JCM 5826 / CCUG 4940 / NBRC 14291 / NCTC 11154) (Bacteroides vulgatus).